A 213-amino-acid chain; its full sequence is MVDPKRLRRRMVREQLEARGINDAEVLAAMSAVPRHLFVQEALRAQAYEDTPLPIGYGQTISQPYVVALMSQLLEVRRGMRVLEIGTGSGYQAAVLATMGCTVFTVERLRELYQDTGNLLRQLGLRGVHMQRRDGTLGMPEAAPFDRIIVTAGGPEVPRPLTDQLDEGGILLIPVGPRPRAQRLMRFRKEQGRMTGEDLGPAIFVDLVGDHGW.

Ser62 is an active-site residue.

The protein belongs to the methyltransferase superfamily. L-isoaspartyl/D-aspartyl protein methyltransferase family.

The protein resides in the cytoplasm. The catalysed reaction is [protein]-L-isoaspartate + S-adenosyl-L-methionine = [protein]-L-isoaspartate alpha-methyl ester + S-adenosyl-L-homocysteine. In terms of biological role, catalyzes the methyl esterification of L-isoaspartyl residues in peptides and proteins that result from spontaneous decomposition of normal L-aspartyl and L-asparaginyl residues. It plays a role in the repair and/or degradation of damaged proteins. The chain is Protein-L-isoaspartate O-methyltransferase from Desulfovibrio desulfuricans (strain ATCC 27774 / DSM 6949 / MB).